The sequence spans 862 residues: MFGILNRGHKIKGTVVLMTKNVFDFNEFVSTTRGGIVGAAGGLFGAATDIVGGIVDGATAIFSRNIAIQLISATKTDGLGNGKVGKQTFLEKHLPSLPNLGDRQDAFNVYFEWDENFGIPEAFYIKNFMQSEFFLVSLTLEDIPNHGTIHFVCNSWVYNAKSYKRDRIFFANKTYLPNETPASLVKYRKEELENLRGDGTGERKEYDRIYDYAVYNDLGNPDKNKNLARTTLGGSSDFPYPRRGRTGRKSTRKDPKCEIPTSDTYIPRDENFGHLKSGDFLTYAIKSLTQNVLPTFQKAFGFNNEFDTFEDVRGLFEGGLYLPTDVISKISPIPVLKEILRTDGEQVLKFPPPHVIRVTKSAWMTDEEFGREMLAGVNPCLIQRLQEFPPKSKLDVTVYGDQTSTMTKEHLEINLGGLTVEEALHGNRLFILDHHDAFIPYLERINDLPTAKCYATRTILFLKDDNTLKPLAIELSLPNPGGKGANSRVILPADGGAESTIWLLAKAYVVVNDSCYHQLMSHWLNTHAVMEPFVIATNRHLSVLHPIYKLLLPHYRDTMNINALARQSLINAGGVIERSFLPGEFAVEMSSAVYKSWVFTDQALPADLIKRGMAVEDPSSPYGLRLVVEDYPYAVDGLEIWDTIQTWVKDYVSLYYPTNDAVKKDTELQAWWKEAVEKGHGDLKDKPWWPKLNTPQDLIHTCSIIIWIASALHAAVNFGQYPYGGFILNRPTITRRLLPEPGTKEYGELTSNYQKAYLRTITGKVEAIVDLSVIEILSRHASDEVYLGQRDNPNWTNNIKALQAFKRFGQKLKEIEEKIMGRNKDSSLRNRNGPVKMPYTVLLPTCEDEGLTFRGIPNSISI.

A PLAT domain is found at 44–171 (FGAATDIVGG…SYKRDRIFFA (128 aa)). The Lipoxygenase domain occupies 174-862 (TYLPNETPAS…FRGIPNSISI (689 aa)). Residues 225–257 (KNLARTTLGGSSDFPYPRRGRTGRKSTRKDPKC) are disordered. The segment covering 242 to 251 (RRGRTGRKST) has biased composition (basic residues). 5 residues coordinate Fe cation: His-522, His-527, His-713, Asn-717, and Ile-862.

This sequence belongs to the lipoxygenase family. Monomer. Requires Fe cation as cofactor.

Its subcellular location is the cytoplasm. The enzyme catalyses (9Z,12Z)-octadecadienoate + O2 = (13S)-hydroperoxy-(9Z,11E)-octadecadienoate. It carries out the reaction (9Z,12Z,15Z)-octadecatrienoate + O2 = (13S)-hydroperoxy-(9Z,11E,15Z)-octadecatrienoate. The catalysed reaction is (9Z,12Z)-octadecadienoate + O2 = (9S)-hydroperoxy-(10E,12Z)-octadecadienoate. It participates in lipid metabolism; oxylipin biosynthesis. Its function is as follows. Plant lipoxygenase may be involved in a number of diverse aspects of plant physiology including growth and development, pest resistance, and senescence or responses to wounding. It catalyzes the hydroperoxidation of lipids containing a cis,cis-1,4-pentadiene structure. This chain is Linoleate 9S-lipoxygenase 1 (LOXA), found in Phaseolus vulgaris (Kidney bean).